A 503-amino-acid chain; its full sequence is Protein FAM124A (503 aa).

The interval Leu434–Ala470 is disordered. The span at Gln436 to Asn445 shows a compositional bias: polar residues. A compositionally biased stretch (low complexity) spans Ser447 to Ser460.

Belongs to the FAM124 family.

The protein is Protein FAM124A (fam124a) of Xenopus tropicalis (Western clawed frog).